Consider the following 583-residue polypeptide: MLO-like protein 6 (583 aa).

The Extracellular segment spans residues 1–15 (MADQVKEKTLEETST). A helical transmembrane segment spans residues 16 to 36 (WAVAVVCFVLLLISIVIEKLI). Topologically, residues 37 to 61 (HKIGSWFKKKNKKALYEALEKVKAE) are cytoplasmic. The chain crosses the membrane as a helical span at residues 62–82 (LMLMGFISLLLTIGQGYISNI). The Extracellular segment spans residues 83–161 (CIPKNIAASM…VSAYGMHQLH (79 aa)). A helical transmembrane segment spans residues 162-182 (IFIFVLAVCHVIYCIVTYALG). Topologically, residues 183-284 (KTKMRRWKKW…KYIQRSLEED (102 aa)) are cytoplasmic. The helical transmembrane segment at 285–305 (FKTIVEINPVIWFIAVLFLLT) threads the bilayer. The Extracellular segment spans residues 306-314 (NTNGLNSYL). A helical transmembrane segment spans residues 315–335 (WLPFIPFIVILIVGTKLQVII). Residues 336-368 (TKLGLRIQEKGDVVKGTPLVQPGDHFFWFGRPR) are Cytoplasmic-facing. The helical transmembrane segment at 369–389 (FILFLIHLVLFTNAFQLAFFV) threads the bilayer. Residues 390 to 411 (WSTYEFGLKNCFHESRVDVIIR) are Extracellular-facing. A helical transmembrane segment spans residues 412-432 (ISIGLLVQILCSYVTLPLYAL). At 433-583 (VTQMGSKMKP…ISLRDFSFKR (151 aa)) the chain is on the cytoplasmic side. Residues 447–468 (ERVATALKSWHHTAKKNIKHGR) form a calmodulin-binding region. The tract at residues 461–583 (KKNIKHGRTS…ISLRDFSFKR (123 aa)) is disordered. Low complexity predominate over residues 470–484 (SESTTPFSSRPTTPT). Residues 541-551 (RFGEEESEKKF) show a composition bias toward basic and acidic residues.

Belongs to the MLO family.

The protein resides in the membrane. In terms of biological role, may be involved in modulation of pathogen defense and leaf cell death. Activity seems to be regulated by Ca(2+)-dependent calmodulin binding and seems not to require heterotrimeric G proteins. This Arabidopsis thaliana (Mouse-ear cress) protein is MLO-like protein 6 (MLO6).